A 477-amino-acid polypeptide reads, in one-letter code: Stromelysin-1 (477 aa).

The first 17 residues, 1–17, serve as a signal peptide directing secretion; the sequence is MKGLPVLLWLCVVVCSS. Positions 18-99 are cleaved as a propeptide — activation peptide; it reads YPLHDSARDD…PRCGVPDVGG (82 aa). A Cysteine switch motif is present at residues 90-97; it reads PRCGVPDV. Position 92 (cysteine 92) interacts with Zn(2+). Ca(2+) is bound by residues aspartate 124 and aspartate 158. Zn(2+) is bound by residues histidine 168 and aspartate 170. The Ca(2+) site is built by aspartate 175, glycine 176, glycine 178, and valine 180. Histidine 183 is a binding site for Zn(2+). Positions 190, 192, and 194 each coordinate Ca(2+). Zn(2+) is bound at residue histidine 196. 3 residues coordinate Ca(2+): aspartate 198, aspartate 199, and glutamate 201. Histidine 218 serves as a coordination point for Zn(2+). Glutamate 219 is an active-site residue. Histidine 222 and histidine 228 together coordinate Zn(2+). 4 Hemopexin repeats span residues 287 to 336, 337 to 383, 385 to 433, and 434 to 477; these read SPMC…WPSL, PSNM…GLPA, VKKI…FPGV, and DSRV…WFNC. An intrachain disulfide couples cysteine 290 to cysteine 477. Aspartate 297 is a binding site for Ca(2+). Residues aspartate 389 and aspartate 438 each coordinate Ca(2+).

The protein belongs to the peptidase M10A family. Ca(2+) serves as cofactor. Requires Zn(2+) as cofactor.

The protein resides in the secreted. It is found in the extracellular space. Its subcellular location is the extracellular matrix. It carries out the reaction Preferential cleavage where P1', P2' and P3' are hydrophobic residues.. Functionally, metalloproteinase with a rather broad substrate specificity that can degrade fibronectin, laminin, gelatins of type I, III, IV, and V; collagens III, IV, X, and IX, and cartilage proteoglycans. Activates different molecules including growth factors, plasminogen or other matrix metalloproteinases such as MMP9. Once released into the extracellular matrix (ECM), the inactive pro-enzyme is activated by the plasmin cascade signaling pathway. Also acts intracellularly. For example, in dopaminergic neurons, gets activated by the serine protease HTRA2 upon stress and plays a pivotal role in DA neuronal degeneration by mediating microglial activation and alpha-synuclein/SNCA cleavage. In addition, plays a role in immune response and possesses antiviral activity against various viruses. Mechanistically, translocates from the cytoplasm into the cell nucleus upon virus infection to influence NF-kappa-B activities. This Mus musculus (Mouse) protein is Stromelysin-1 (Mmp3).